Consider the following 114-residue polypeptide: Peroxisomal biogenesis factor 39 (114 aa).

Disordered regions lie at residues 1-26 (MSWWQDMDQRGGVSSPSGALASAEPA) and 53-114 (ITAT…PRVS). Phosphoserine is present on Ser102.

The protein localises to the peroxisome. Functionally, may be a peroxin involved in the PTS2-mediated protein import pathway. This Mus musculus (Mouse) protein is Peroxisomal biogenesis factor 39 (Pex39).